Consider the following 175-residue polypeptide: Coagulogen (175 aa).

Disulfide bonds link cysteine 8–cysteine 167, cysteine 10–cysteine 95, cysteine 60–cysteine 161, cysteine 65–cysteine 121, cysteine 75–cysteine 168, cysteine 88–cysteine 140, cysteine 127–cysteine 170, and cysteine 134–cysteine 172.

Belongs to the coagulin family. In terms of assembly, coagulogen is cleaved after Arg-18 and Arg-46 by a clotting enzyme contained in the hemocyte and activated by a bacterial endotoxin (lipopolysaccharide). This cleavage releases the peptide C and leaves 2 chains of coagulin, A and B, linked by two disulfide bonds. Coagulin molecules interlink to form a gel. As to expression, hemolymph.

The protein resides in the secreted. Its function is as follows. Coagulogen is a gel-forming protein of hemolymph; it hinders the spread of invaders by immobilizing them. The chain is Coagulogen from Carcinoscorpius rotundicauda (Mangrove horseshoe crab).